Reading from the N-terminus, the 338-residue chain is SPbeta prophage-derived uncharacterized protein YonB (338 aa).

The sequence is that of SPbeta prophage-derived uncharacterized protein YonB (yonB) from Bacillus subtilis (strain 168).